Reading from the N-terminus, the 215-residue chain is Triosephosphate isomerase (215 aa).

His-82 acts as the Electrophile in catalysis. Catalysis depends on Glu-153, which acts as the Proton acceptor.

This sequence belongs to the triosephosphate isomerase family. As to quaternary structure, homodimer.

It carries out the reaction D-glyceraldehyde 3-phosphate = dihydroxyacetone phosphate. The protein operates within carbohydrate biosynthesis; gluconeogenesis. Its pathway is carbohydrate degradation; glycolysis; D-glyceraldehyde 3-phosphate from glycerone phosphate: step 1/1. In Heliothis virescens (Tobacco budworm moth), this protein is Triosephosphate isomerase (Tpi).